Consider the following 168-residue polypeptide: Small ribosomal subunit protein uS9 (168 aa).

Residues 1–38 (MAKIADSIDSAQADSVENVESYSTETPESAAPAAPRPV) form a disordered region. Residues 9-22 (DSAQADSVENVESY) are compositionally biased toward polar residues. A compositionally biased stretch (low complexity) spans 23 to 37 (STETPESAAPAAPRP).

Belongs to the universal ribosomal protein uS9 family.

In Leifsonia xyli subsp. xyli (strain CTCB07), this protein is Small ribosomal subunit protein uS9.